The chain runs to 344 residues: uncharacterized protein (344 aa).

Residues 304-344 are disordered; sequence AVPAPTPRRPLDSVLQIRQTPEKGRNASDRNARETGWFSPP. Residues 323–336 show a composition bias toward basic and acidic residues; sequence TPEKGRNASDRNAR.

This is an uncharacterized protein from Mycobacterium tuberculosis (strain CDC 1551 / Oshkosh).